The sequence spans 532 residues: Probable rhamnogalacturonase B (532 aa).

Positions 1 to 21 (MRINTLSLFSLVSLVPTLALA) are cleaved as a signal peptide. Cysteine 42 and cysteine 68 are oxidised to a cystine. Residue aspartate 219 is the Proton donor of the active site. Residues cysteine 221 and cysteine 238 are joined by a disulfide bond. The N-linked (GlcNAc...) asparagine glycan is linked to asparagine 239. Residue histidine 294 is part of the active site. Residue asparagine 321 is glycosylated (N-linked (GlcNAc...) asparagine). 2 disulfide bridges follow: cysteine 344-cysteine 350 and cysteine 374-cysteine 383. Composition is skewed to low complexity over residues 466 to 475 (TVAAATSTPA) and 490 to 499 (QPSQQSPGQS). The interval 466–532 (TVAAATSTPA…HRHHQRHGHH (67 aa)) is disordered. A compositionally biased stretch (basic residues) spans 521–532 (AGHRHHQRHGHH).

It belongs to the glycosyl hydrolase 28 family.

It localises to the secreted. It catalyses the reaction Endohydrolysis of alpha-D-GalA-(1-&gt;2)-alpha-L-Rha glycosidic bond in the rhamnogalacturonan I backbone with initial inversion of anomeric configuration releasing oligosaccharides with beta-D-GalA at the reducing end.. In terms of biological role, pectinolytic enzymes consist of four classes of enzymes: pectine lyase, polygalacturonase, pectin methylesterase and rhamnogalacturonase. Hydrolyzes alpha-D-galacturonopyranosyl-(1,2)-alpha-L-rhamnopyranosyl linkages in the backbone of the hairy regions of pectins. This is Probable rhamnogalacturonase B (rhgB) from Aspergillus oryzae (strain ATCC 42149 / RIB 40) (Yellow koji mold).